A 329-amino-acid polypeptide reads, in one-letter code: Mo25-like protein (329 aa).

This sequence belongs to the Mo25 family.

The protein is Mo25-like protein (pmo25) of Schizosaccharomyces pombe (strain 972 / ATCC 24843) (Fission yeast).